Here is a 356-residue protein sequence, read N- to C-terminus: Thymidine kinase (356 aa).

Residues 1–29 (MMDSRATYVPPKKISESNSNAEEDPTDCS) are disordered. 61–68 (GCVGVGKT) provides a ligand contact to ATP. Glu86 serves as the catalytic Proton acceptor. Gln122 contributes to the substrate binding site. Arg208 lines the ATP pocket. A substrate-binding site is contributed by Arg214.

It belongs to the herpesviridae thymidine kinase family. As to quaternary structure, homodimer.

The enzyme catalyses thymidine + ATP = dTMP + ADP + H(+). Its function is as follows. Catalyzes the transfer of the gamma-phospho group of ATP to thymidine to generate dTMP in the salvage pathway of pyrimidine synthesis. The dTMP serves as a substrate for DNA polymerase during viral DNA replication. Allows the virus to be reactivated and to grow in non-proliferative cells lacking a high concentration of phosphorylated nucleic acid precursors. This Elephas maximus (Indian elephant) protein is Thymidine kinase.